The sequence spans 447 residues: UDP-N-acetyl-alpha-D-muramoyl-L-alanyl-L-glutamate epimerase (447 aa).

This sequence belongs to the MurL family.

The catalysed reaction is UDP-N-acetyl-alpha-D-muramoyl-L-alanyl-L-glutamate + ATP + H2O = UDP-N-acetyl-alpha-D-muramoyl-L-alanyl-D-glutamate + AMP + diphosphate + H(+). It participates in cell wall biogenesis; peptidoglycan biosynthesis. Its function is as follows. Cell wall formation. Catalyzes epimerization of the terminal L-glutamate in UDP-N-acetyl-alpha-D-muramoyl-L-alanyl-L-glutamate. This is UDP-N-acetyl-alpha-D-muramoyl-L-alanyl-L-glutamate epimerase from Micromonospora sp. (strain ATCC 39149 / NRRL 15099 / SCC 1413).